A 77-amino-acid polypeptide reads, in one-letter code: Serine protease inhibitor 2 (77 aa).

Positions 1–17 are cleaved as a signal peptide; the sequence is MMFTPLIVLTLLVLATA. Intrachain disulfides connect C21/C53, C30/C48, C33/C44, C37/C74, and C55/C68. The 54-residue stretch at 21 to 74 folds into the TIL domain; that stretch reads CGPNEQWSDCPKCELQCGESDKPCATICGEPKCYCSPDKYRRIPDGRCIRKIQC.

It is found in the secreted. In terms of biological role, defends the organism against the host's proteinases. In Anisakis simplex (Herring worm), this protein is Serine protease inhibitor 2.